We begin with the raw amino-acid sequence, 261 residues long: tRNA pseudouridine synthase A (261 aa).

Asp51 acts as the Nucleophile in catalysis. Position 109 (Tyr109) interacts with substrate.

The protein belongs to the tRNA pseudouridine synthase TruA family. Homodimer.

The catalysed reaction is uridine(38/39/40) in tRNA = pseudouridine(38/39/40) in tRNA. Its function is as follows. Formation of pseudouridine at positions 38, 39 and 40 in the anticodon stem and loop of transfer RNAs. This Shewanella frigidimarina (strain NCIMB 400) protein is tRNA pseudouridine synthase A.